A 330-amino-acid polypeptide reads, in one-letter code: tRNA(Ile)-lysidine synthase (330 aa).

Position 31–36 (31–36 (SGGQDS)) interacts with ATP.

This sequence belongs to the tRNA(Ile)-lysidine synthase family.

It localises to the cytoplasm. It catalyses the reaction cytidine(34) in tRNA(Ile2) + L-lysine + ATP = lysidine(34) in tRNA(Ile2) + AMP + diphosphate + H(+). Ligates lysine onto the cytidine present at position 34 of the AUA codon-specific tRNA(Ile) that contains the anticodon CAU, in an ATP-dependent manner. Cytidine is converted to lysidine, thus changing the amino acid specificity of the tRNA from methionine to isoleucine. The chain is tRNA(Ile)-lysidine synthase from Synechocystis sp. (strain ATCC 27184 / PCC 6803 / Kazusa).